The sequence spans 341 residues: L-threonine 3-dehydrogenase (341 aa).

Position 38 (Cys38) interacts with Zn(2+). Active-site charge relay system residues include Thr40 and His43. Zn(2+) contacts are provided by His63, Glu64, Cys93, Cys96, Cys99, and Cys107. NAD(+) contacts are provided by residues Ile175, Asp195, Arg200, Leu262–Ile264, and Ile286–Tyr287.

This sequence belongs to the zinc-containing alcohol dehydrogenase family. As to quaternary structure, homotetramer. Zn(2+) is required as a cofactor.

The protein localises to the cytoplasm. It carries out the reaction L-threonine + NAD(+) = (2S)-2-amino-3-oxobutanoate + NADH + H(+). Its pathway is amino-acid degradation; L-threonine degradation via oxydo-reductase pathway; glycine from L-threonine: step 1/2. Functionally, catalyzes the NAD(+)-dependent oxidation of L-threonine to 2-amino-3-ketobutyrate. This is L-threonine 3-dehydrogenase from Serratia proteamaculans (strain 568).